The sequence spans 280 residues: Inner membrane ABC transporter permease protein YcjP (280 aa).

At 1–10 (MATNKRTLSR) the chain is on the cytoplasmic side. A helical transmembrane segment spans residues 11–31 (IGFYCGLALFLIITLFPFFVM). At 32–53 (LMTSFKGAKEAISLHPTLLPQQ) the chain is on the periplasmic side. A helical membrane pass occupies residues 54–74 (WTLEHYVDIFNPMIFPFVDYF). In terms of domain architecture, ABC transmembrane type-1 spans 74-265 (FRNSLVVSVV…LPVVIMYALS (192 aa)). Over 75–77 (RNS) the chain is Cytoplasmic. The chain crosses the membrane as a helical span at residues 78–98 (LVVSVVSSVVAVFLGILGAYA). Topologically, residues 99-117 (LSRLRFKGRMTINASFYTV) are periplasmic. Residues 118 to 138 (YMFSGILLVVPLFKIITALGI) traverse the membrane as a helical segment. Topologically, residues 139–140 (YD) are cytoplasmic. Residues 141-161 (TEMALIITMVTQTLPTAVFML) traverse the membrane as a helical segment. The Periplasmic portion of the chain corresponds to 162-189 (KSYFDTIPDEIEEAAMMDGLNRLQIIFR). The chain crosses the membrane as a helical span at residues 190-210 (ITVPLAMSGLISVFVYCFMVA). At 211–214 (WNDY) the chain is on the cytoplasmic side. The helical transmembrane segment at 215–235 (LFASIFLSSASNFTLPVGLNA) threads the bilayer. At 236–242 (LFSTPDY) the chain is on the periplasmic side. A helical membrane pass occupies residues 243–263 (IWGRMMAASLVTALPVVIMYA). At 264–280 (LSERFIKSGLTAGGVKG) the chain is on the cytoplasmic side.

The protein belongs to the binding-protein-dependent transport system permease family. MalFG subfamily.

Its subcellular location is the cell inner membrane. Functionally, probably part of the binding-protein-dependent transport system YcjNOP. Probably responsible for the translocation of the substrate across the membrane. The sequence is that of Inner membrane ABC transporter permease protein YcjP (ycjP) from Escherichia coli (strain K12).